The following is an 874-amino-acid chain: Alanine--tRNA ligase (874 aa).

4 residues coordinate Zn(2+): His-564, His-568, Cys-665, and His-669.

It belongs to the class-II aminoacyl-tRNA synthetase family. Zn(2+) serves as cofactor.

Its subcellular location is the cytoplasm. The catalysed reaction is tRNA(Ala) + L-alanine + ATP = L-alanyl-tRNA(Ala) + AMP + diphosphate. Functionally, catalyzes the attachment of alanine to tRNA(Ala) in a two-step reaction: alanine is first activated by ATP to form Ala-AMP and then transferred to the acceptor end of tRNA(Ala). Also edits incorrectly charged Ser-tRNA(Ala) and Gly-tRNA(Ala) via its editing domain. The polypeptide is Alanine--tRNA ligase (Delftia acidovorans (strain DSM 14801 / SPH-1)).